A 250-amino-acid chain; its full sequence is 7-carboxy-7-deazaguanine synthase (250 aa).

Substrate-binding positions include 15–17 (VQG) and Arg-30. A Radical SAM core domain is found at 21 to 250 (LIGLRQVFIR…PQTHRFMGQL (230 aa)). 3 residues coordinate [4Fe-4S] cluster: Cys-34, Cys-38, and Cys-41. A Mg(2+)-binding site is contributed by Thr-43. Thr-96 is a substrate binding site. Gly-98 serves as a coordination point for S-adenosyl-L-methionine.

This sequence belongs to the radical SAM superfamily. 7-carboxy-7-deazaguanine synthase family. As to quaternary structure, homodimer. The cofactor is [4Fe-4S] cluster. S-adenosyl-L-methionine is required as a cofactor. Requires Mg(2+) as cofactor.

The catalysed reaction is 6-carboxy-5,6,7,8-tetrahydropterin + H(+) = 7-carboxy-7-deazaguanine + NH4(+). It participates in purine metabolism; 7-cyano-7-deazaguanine biosynthesis. Its function is as follows. Catalyzes the complex heterocyclic radical-mediated conversion of 6-carboxy-5,6,7,8-tetrahydropterin (CPH4) to 7-carboxy-7-deazaguanine (CDG), a step common to the biosynthetic pathways of all 7-deazapurine-containing compounds. This is 7-carboxy-7-deazaguanine synthase from Geobacter sulfurreducens (strain ATCC 51573 / DSM 12127 / PCA).